The sequence spans 379 residues: Synaptic vesicle membrane protein VAT-1 (379 aa).

S273 bears the Phosphoserine mark.

It belongs to the zinc-containing alcohol dehydrogenase family. Quinone oxidoreductase subfamily. As to expression, cholinergic synaptic vesicles.

It is found in the cytoplasmic vesicle. The protein resides in the secretory vesicle. Its subcellular location is the synaptic vesicle membrane. Its function is as follows. May play a central role in the functions mediated by specific classes of synaptic vesicles. This Tetronarce californica (Pacific electric ray) protein is Synaptic vesicle membrane protein VAT-1.